Here is a 409-residue protein sequence, read N- to C-terminus: LL-diaminopimelate aminotransferase (409 aa).

Y15 and G42 together coordinate substrate. Residues Y72, 108-109 (SK), Y132, N187, Y218, and 246-248 (SFS) contribute to the pyridoxal 5'-phosphate site. 3 residues coordinate substrate: K109, Y132, and N187. At K249 the chain carries N6-(pyridoxal phosphate)lysine. Pyridoxal 5'-phosphate contacts are provided by R257 and N292. Residues N292 and R388 each coordinate substrate.

This sequence belongs to the class-I pyridoxal-phosphate-dependent aminotransferase family. LL-diaminopimelate aminotransferase subfamily. In terms of assembly, homodimer. It depends on pyridoxal 5'-phosphate as a cofactor.

The enzyme catalyses (2S,6S)-2,6-diaminopimelate + 2-oxoglutarate = (S)-2,3,4,5-tetrahydrodipicolinate + L-glutamate + H2O + H(+). It functions in the pathway amino-acid biosynthesis; L-lysine biosynthesis via DAP pathway; LL-2,6-diaminopimelate from (S)-tetrahydrodipicolinate (aminotransferase route): step 1/1. Involved in the synthesis of meso-diaminopimelate (m-DAP or DL-DAP), required for both lysine and peptidoglycan biosynthesis. Catalyzes the direct conversion of tetrahydrodipicolinate to LL-diaminopimelate. This is LL-diaminopimelate aminotransferase from Heliobacterium modesticaldum (strain ATCC 51547 / Ice1).